Reading from the N-terminus, the 321-residue chain is Lipoyl synthase (321 aa).

Residues Cys68, Cys73, Cys79, Cys94, Cys98, Cys101, and Ser308 each coordinate [4Fe-4S] cluster. One can recognise a Radical SAM core domain in the interval 80 to 297 (FNHGTATFMI…KEIALELGFT (218 aa)).

This sequence belongs to the radical SAM superfamily. Lipoyl synthase family. [4Fe-4S] cluster is required as a cofactor.

Its subcellular location is the cytoplasm. The enzyme catalyses [[Fe-S] cluster scaffold protein carrying a second [4Fe-4S](2+) cluster] + N(6)-octanoyl-L-lysyl-[protein] + 2 oxidized [2Fe-2S]-[ferredoxin] + 2 S-adenosyl-L-methionine + 4 H(+) = [[Fe-S] cluster scaffold protein] + N(6)-[(R)-dihydrolipoyl]-L-lysyl-[protein] + 4 Fe(3+) + 2 hydrogen sulfide + 2 5'-deoxyadenosine + 2 L-methionine + 2 reduced [2Fe-2S]-[ferredoxin]. It participates in protein modification; protein lipoylation via endogenous pathway; protein N(6)-(lipoyl)lysine from octanoyl-[acyl-carrier-protein]: step 2/2. Its function is as follows. Catalyzes the radical-mediated insertion of two sulfur atoms into the C-6 and C-8 positions of the octanoyl moiety bound to the lipoyl domains of lipoate-dependent enzymes, thereby converting the octanoylated domains into lipoylated derivatives. This is Lipoyl synthase from Aliivibrio fischeri (strain MJ11) (Vibrio fischeri).